Here is a 492-residue protein sequence, read N- to C-terminus: Probable endopolygalacturonase D (492 aa).

Residues 1–16 form the signal peptide; sequence MKRSALILSFLPLVFG. A disulfide bridge connects residues Cys-151 and Cys-166. PbH1 repeat units lie at residues 216 to 238, 258 to 280, 281 to 319, and 320 to 341; these read GTSV…AYWD, MYNS…EIES, TEHL…DIKE, and SSYF…AVTS. A glycan (N-linked (GlcNAc...) asparagine) is linked at Asn-292. Catalysis depends on Asp-334, which acts as the Proton donor. An intrachain disulfide couples Cys-336 to Cys-352. The active site involves His-356. 3 PbH1 repeats span residues 371–392, 400–422, and 434–478; these read VNGV…RIKT, VYNI…DVQQ, and TNGV…SITG. 2 N-linked (GlcNAc...) asparagine glycosylation sites follow: Asn-407 and Asn-441. Intrachain disulfides connect Cys-461–Cys-466 and Cys-484–Cys-491.

This sequence belongs to the glycosyl hydrolase 28 family.

The protein localises to the secreted. The enzyme catalyses (1,4-alpha-D-galacturonosyl)n+m + H2O = (1,4-alpha-D-galacturonosyl)n + (1,4-alpha-D-galacturonosyl)m.. Involved in maceration and soft-rotting of plant tissue. Hydrolyzes the 1,4-alpha glycosidic bonds of de-esterified pectate in the smooth region of the plant cell wall. This Aspergillus oryzae (strain ATCC 42149 / RIB 40) (Yellow koji mold) protein is Probable endopolygalacturonase D (pgaD).